A 27-amino-acid chain; its full sequence is Conotoxin as14a (27 aa).

Cystine bridges form between cysteine 6/cysteine 26 and cysteine 10/cysteine 22.

This sequence belongs to the conotoxin L superfamily. In terms of tissue distribution, expressed by the venom duct.

It is found in the secreted. In terms of biological role, in vivo, intracranial injection, elicits scratching and grooming activity in mice. The polypeptide is Conotoxin as14a (Conus cancellatus (Cancellate cone)).